The chain runs to 476 residues: Serine/threonine-protein kinase Chk1 (476 aa).

The tract at residues 1–265 (MAVPFVEDWD…IPDIKKDRWY (265 aa)) is interaction with CLSPN. The 257-residue stretch at 9-265 (WDLVQTLGEG…IPDIKKDRWY (257 aa)) folds into the Protein kinase domain. ATP-binding positions include 15–23 (LGEGAYGEV) and lysine 38. The Proton acceptor role is filled by aspartate 130. A Glycyl lysine isopeptide (Lys-Gly) (interchain with G-Cter in ubiquitin) cross-link involves residue lysine 132. The interval 267-329 (KPLNRGAKRP…EPRTGLSLWD (63 aa)) is disordered. Serine 280 carries the post-translational modification Phosphoserine; by PKB/AKT1. The span at 280–291 (SGGMSESSSGFS) shows a compositional bias: low complexity. Serine 286, serine 296, and serine 301 each carry phosphoserine. The segment covering 298–320 (LDFSPINSGSSEENVKFSSSQPE) has biased composition (polar residues). Phosphoserine; by ATM and ATR occurs at positions 317 and 345. Residues 391–476 (QCLKETFEKL…SSQKVWFPVT (86 aa)) form an autoinhibitory region region. Lysine 436 is covalently cross-linked (Glycyl lysine isopeptide (Lys-Gly) (interchain with G-Cter in ubiquitin)). 3 positions are modified to phosphoserine: serine 463, serine 467, and serine 468.

It belongs to the protein kinase superfamily. CAMK Ser/Thr protein kinase family. NIM1 subfamily. Interacts (phosphorylated by ATR) with RAD51. Interacts with and phosphorylates CLSPN, an adapter protein that regulates the ATR-dependent phosphorylation of CHEK1. Interacts with BRCA1. Interacts with and phosphorylates CDC25A, CDC25B and CDC25C. Interacts with FBXO6, which regulates CHEK1. Interacts with PPM1D, which regulates CHEK1 through dephosphorylation. Interacts with TIMELESS; DNA damage-dependent. Interacts with FEM1B; activates CHEK1 in response to stress. Interacts with TLK1. Interacts with XPO1 and YWHAZ. Interacts with CDK5RAP3; antagonizes CHEK1. Phosphorylated by ATR in a RAD17-dependent manner in response to ultraviolet irradiation and inhibition of DNA replication. Phosphorylated by ATM in response to ionizing irradiation. ATM and ATR can both phosphorylate Ser-317 and Ser-345 and this results in enhanced kinase activity. Phosphorylation at Ser-345 induces a change in the conformation of the protein, activates the kinase activity and is a prerequisite for interaction with FBXO6 and subsequent ubiquitination at Lys-436. Phosphorylation at Ser-345 also increases binding to 14-3-3 proteins and promotes nuclear retention. Conversely, dephosphorylation at Ser-345 by PPM1D may contribute to exit from checkpoint mediated cell cycle arrest. Phosphorylation at Ser-280 by AKT1/PKB, may promote mono and/or diubiquitination. Also phosphorylated at undefined residues during mitotic arrest, resulting in decreased activity. Post-translationally, ubiquitinated. Mono or diubiquitination promotes nuclear exclusion. The activated form (phosphorylated on Ser-345) is polyubiquitinated at Lys-436 by some SCF-type E3 ubiquitin ligase complex containing FBXO6 promoting its degradation. Ubiquitination and degradation are required to terminate the checkpoint and ensure that activated CHEK1 does not accumulate as cells progress through S phase, when replication forks encounter transient impediments during normal DNA replication. 'Lys-63'-mediated ubiquitination by TRAF4 at Lys-132 activates cell cycle arrest and activation of DNA repair. In terms of processing, proteolytically cleaved at the C-terminus by SPRTN during normal DNA replication, thereby promoting CHEK1 removal from chromatin and activating the protein kinase activity. As to expression, expressed in brain, heart, liver, lung, skeletal muscle, spleen and testis. Expressed only in liver.

Its subcellular location is the nucleus. The protein resides in the chromosome. It is found in the cytoplasm. The protein localises to the cytoskeleton. It localises to the microtubule organizing center. Its subcellular location is the centrosome. It carries out the reaction L-seryl-[protein] + ATP = O-phospho-L-seryl-[protein] + ADP + H(+). It catalyses the reaction L-threonyl-[protein] + ATP = O-phospho-L-threonyl-[protein] + ADP + H(+). With respect to regulation, activated through phosphorylation predominantly by ATR but also by ATM in response to DNA damage or inhibition of DNA replication. Activation is modulated by several mediators including CLSPN, BRCA1 and FEM1B. Proteolytic cleavage at the C-terminus by SPRTN during normal DNA replication activates the protein kinase activity. Functionally, serine/threonine-protein kinase which is required for checkpoint-mediated cell cycle arrest and activation of DNA repair in response to the presence of DNA damage or unreplicated DNA. May also negatively regulate cell cycle progression during unperturbed cell cycles. This regulation is achieved by a number of mechanisms that together help to preserve the integrity of the genome. Recognizes the substrate consensus sequence [R-X-X-S/T]. Binds to and phosphorylates CDC25A, CDC25B and CDC25C. Phosphorylation of CDC25A at 'Ser-178' and 'Thr-507' and phosphorylation of CDC25C at 'Ser-216' creates binding sites for 14-3-3 proteins which inhibit CDC25A and CDC25C. Phosphorylation of CDC25A at 'Ser-76', 'Ser-124', 'Ser-178', 'Ser-279' and 'Ser-293' promotes proteolysis of CDC25A. Phosphorylation of CDC25A at 'Ser-76' primes the protein for subsequent phosphorylation at 'Ser-79', 'Ser-82' and 'Ser-88' by NEK11, which is required for polyubiquitination and degradation of CDCD25A. Inhibition of CDC25 leads to increased inhibitory tyrosine phosphorylation of CDK-cyclin complexes and blocks cell cycle progression. Also phosphorylates NEK6. Binds to and phosphorylates RAD51 at 'Thr-309', which promotes the release of RAD51 from BRCA2 and enhances the association of RAD51 with chromatin, thereby promoting DNA repair by homologous recombination. Phosphorylates multiple sites within the C-terminus of TP53, which promotes activation of TP53 by acetylation and promotes cell cycle arrest and suppression of cellular proliferation. Also promotes repair of DNA cross-links through phosphorylation of FANCE. Binds to and phosphorylates TLK1 at 'Ser-743', which prevents the TLK1-dependent phosphorylation of the chromatin assembly factor ASF1A. This may enhance chromatin assembly both in the presence or absence of DNA damage. May also play a role in replication fork maintenance through regulation of PCNA. May regulate the transcription of genes that regulate cell-cycle progression through the phosphorylation of histones. Phosphorylates histone H3.1 (to form H3T11ph), which leads to epigenetic inhibition of a subset of genes. May also phosphorylate RB1 to promote its interaction with the E2F family of transcription factors and subsequent cell cycle arrest. Phosphorylates SPRTN, promoting SPRTN recruitment to chromatin. Reduces replication stress and activates the G2/M checkpoint, by phosphorylating and inactivating PABIR1/FAM122A and promoting the serine/threonine-protein phosphatase 2A-mediated dephosphorylation and stabilization of WEE1 levels and activity. In Rattus norvegicus (Rat), this protein is Serine/threonine-protein kinase Chk1 (Chek1).